The following is a 1077-amino-acid chain: Zinc finger protein 518B (1077 aa).

The segment covering Tyr9 to Ala30 has biased composition (polar residues). The interval Tyr9–Arg35 is disordered. C2H2-type zinc fingers lie at residues Phe160–His182 and Tyr188–His211. Residues Thr372–Ser397 are disordered. A Glycyl lysine isopeptide (Lys-Gly) (interchain with G-Cter in SUMO2) cross-link involves residue Lys479. Disordered regions lie at residues Leu561–Ser585, Gly599–Gly622, Lys675–Gln739, and Gln825–Asp852. Positions Ser564–Glu574 are enriched in basic and acidic residues. Composition is skewed to polar residues over residues Ser605–Ala621 and Lys675–Ser688. Glycyl lysine isopeptide (Lys-Gly) (interchain with G-Cter in SUMO2) cross-links involve residues Lys847 and Lys861. A disordered region spans residues Gln895–Lys914. The C2H2-type 3 zinc finger occupies Phe1039 to His1061.

The protein belongs to the krueppel C2H2-type zinc-finger protein family.

Its subcellular location is the nucleus. Through its association with the EHMT1-EHMT2/G9A and PRC2/EED-EZH2 histone methyltransferase complexes may function in gene silencing, regulating repressive post-translational methylation of histone tails at promoters of target genes. The sequence is that of Zinc finger protein 518B (Znf518b) from Mus musculus (Mouse).